Consider the following 161-residue polypeptide: Regulator of ribonuclease activity A (161 aa).

This sequence belongs to the RraA family. In terms of assembly, homotrimer. Binds to both RNA-binding sites in the C-terminal region of Rne and to RhlB.

The protein resides in the cytoplasm. In terms of biological role, globally modulates RNA abundance by binding to RNase E (Rne) and regulating its endonucleolytic activity. Can modulate Rne action in a substrate-dependent manner by altering the composition of the degradosome. Modulates RNA-binding and helicase activities of the degradosome. This Shewanella sediminis (strain HAW-EB3) protein is Regulator of ribonuclease activity A.